Consider the following 251-residue polypeptide: Triosephosphate isomerase (251 aa).

9 to 11 (NWK) is a binding site for substrate. Residue H95 is the Electrophile of the active site. The Proton acceptor role is filled by E167. Substrate contacts are provided by residues G173, S213, and 234-235 (GG). S213 is modified (phosphoserine).

It belongs to the triosephosphate isomerase family. As to quaternary structure, homodimer.

The protein resides in the cytoplasm. The enzyme catalyses D-glyceraldehyde 3-phosphate = dihydroxyacetone phosphate. It functions in the pathway carbohydrate biosynthesis; gluconeogenesis. The protein operates within carbohydrate degradation; glycolysis; D-glyceraldehyde 3-phosphate from glycerone phosphate: step 1/1. In terms of biological role, involved in the gluconeogenesis. Catalyzes stereospecifically the conversion of dihydroxyacetone phosphate (DHAP) to D-glyceraldehyde-3-phosphate (G3P). This chain is Triosephosphate isomerase, found in Anoxybacillus flavithermus (strain DSM 21510 / WK1).